The primary structure comprises 341 residues: Phenylalanine--tRNA ligase alpha subunit (341 aa).

Glutamate 256 is a binding site for Mg(2+).

Belongs to the class-II aminoacyl-tRNA synthetase family. Phe-tRNA synthetase alpha subunit type 1 subfamily. In terms of assembly, tetramer of two alpha and two beta subunits. Mg(2+) is required as a cofactor.

The protein resides in the cytoplasm. It catalyses the reaction tRNA(Phe) + L-phenylalanine + ATP = L-phenylalanyl-tRNA(Phe) + AMP + diphosphate + H(+). This Chlamydia abortus (strain DSM 27085 / S26/3) (Chlamydophila abortus) protein is Phenylalanine--tRNA ligase alpha subunit.